The following is a 197-amino-acid chain: Recombination protein RecR (197 aa).

The C4-type zinc finger occupies 57–72 (CSVCFAITEDDPCWIC). Residues 79-174 (GTICVVEEPQ…KVTRLAHGIP (96 aa)) enclose the Toprim domain.

The protein belongs to the RecR family.

In terms of biological role, may play a role in DNA repair. It seems to be involved in an RecBC-independent recombinational process of DNA repair. It may act with RecF and RecO. The chain is Recombination protein RecR from Citrifermentans bemidjiense (strain ATCC BAA-1014 / DSM 16622 / JCM 12645 / Bem) (Geobacter bemidjiensis).